Here is a 620-residue protein sequence, read N- to C-terminus: Chaperone protein HscA homolog (620 aa).

It belongs to the heat shock protein 70 family.

Functionally, chaperone involved in the maturation of iron-sulfur cluster-containing proteins. Has a low intrinsic ATPase activity which is markedly stimulated by HscB. The protein is Chaperone protein HscA homolog of Shewanella sp. (strain MR-7).